We begin with the raw amino-acid sequence, 404 residues long: Cysteine desulfurase IscS (404 aa).

Residues 73–74, asparagine 153, glutamine 181, and 201–203 each bind pyridoxal 5'-phosphate; these read AT and SAH. The residue at position 204 (lysine 204) is an N6-(pyridoxal phosphate)lysine. Threonine 241 contacts pyridoxal 5'-phosphate. Residue cysteine 327 is the Cysteine persulfide intermediate of the active site. Cysteine 327 provides a ligand contact to [2Fe-2S] cluster.

The protein belongs to the class-V pyridoxal-phosphate-dependent aminotransferase family. NifS/IscS subfamily. As to quaternary structure, homodimer. Forms a heterotetramer with IscU, interacts with other sulfur acceptors. The cofactor is pyridoxal 5'-phosphate.

It localises to the cytoplasm. It catalyses the reaction (sulfur carrier)-H + L-cysteine = (sulfur carrier)-SH + L-alanine. It functions in the pathway cofactor biosynthesis; iron-sulfur cluster biosynthesis. Master enzyme that delivers sulfur to a number of partners involved in Fe-S cluster assembly, tRNA modification or cofactor biosynthesis. Catalyzes the removal of elemental sulfur atoms from cysteine to produce alanine. Functions as a sulfur delivery protein for Fe-S cluster synthesis onto IscU, an Fe-S scaffold assembly protein, as well as other S acceptor proteins. This Anaeromyxobacter dehalogenans (strain 2CP-C) protein is Cysteine desulfurase IscS.